Consider the following 350-residue polypeptide: Histidinol-phosphate aminotransferase 1 (350 aa).

The residue at position 210 (K210) is an N6-(pyridoxal phosphate)lysine.

This sequence belongs to the class-II pyridoxal-phosphate-dependent aminotransferase family. Histidinol-phosphate aminotransferase subfamily. In terms of assembly, homodimer. The cofactor is pyridoxal 5'-phosphate.

It carries out the reaction L-histidinol phosphate + 2-oxoglutarate = 3-(imidazol-4-yl)-2-oxopropyl phosphate + L-glutamate. It participates in amino-acid biosynthesis; L-histidine biosynthesis; L-histidine from 5-phospho-alpha-D-ribose 1-diphosphate: step 7/9. The sequence is that of Histidinol-phosphate aminotransferase 1 from Pseudomonas fluorescens (strain ATCC BAA-477 / NRRL B-23932 / Pf-5).